A 250-amino-acid chain; its full sequence is PTB-containing, cubilin and LRP1-interacting protein (250 aa).

The region spanning V93–G250 is the PID domain. The interval D229–G250 is disordered. Residues S236 and S247 each carry the phosphoserine modification. The span at V241–G250 shows a compositional bias: acidic residues.

In terms of assembly, found in a complex with PID1/PCLI1, LRP1 and CUBNI. Interacts with LRP1 and CUBN. Expressed in subcutaneous fat, heart, skeletal muscle, brain, colon, thymus, spleen, kidney, liver, small intestine, placenta, lung and peripheral blood leukocyte.

The protein resides in the cytoplasm. Functionally, increases proliferation of preadipocytes without affecting adipocytic differentiation. This is PTB-containing, cubilin and LRP1-interacting protein (PID1) from Homo sapiens (Human).